We begin with the raw amino-acid sequence, 564 residues long: MPEIDMKPRSRDVTDGIEATAARGMLRAVGMGDEDWAKPQIGVASSWSEITPCNLSLDRLAQGAKEGVHAGGGYPLQFGTISVSDGISMGHEGMHFSLVSREVIADSVETVMMAERLDGSVLLAGCDKSLPGMLMAAARLDLSSVFLYAGSIAPGWVKLSDGTEKEVTIIDAFEAVGACKAGTMSQEDLTRIEKAICPGEGACGGMYTANTMASVAEALGMSLPGSAAPPSADRRRDYFAHRSGEAVVNLIAEGITARDIMTKEAFENAISVVMAFGGSTNAVLHLLAIAREAEVDLQLSDFNRIADRVPHLGDLKPFGRFVMNDVDRVGGVPVVMKALLDAGLLHGDVMTVTGRTMRENLEAMDLAELDGTVIRKMDDPIHATGGISVLHGSLAPEGAVVKTAGFDLDVFEGPARVFERERAAMDALTEGLISKGDVIVIRYEGPKGGPGMREMLAITGAIKGAGLGKDVLLLTDGRFSGGTTGLCIGHMAPEAVDAGPVAFVRDGDRIRVDIAARTLDLLVDEAELAARREGWAPLPPRYTRGVLAKYAKLVHSAAEGAITG.

Cysteine 53 serves as a coordination point for [2Fe-2S] cluster. Position 85 (aspartate 85) interacts with Mg(2+). Residue cysteine 126 coordinates [2Fe-2S] cluster. Positions 127 and 128 each coordinate Mg(2+). At lysine 128 the chain carries N6-carboxylysine. Cysteine 203 contacts [2Fe-2S] cluster. Residue glutamate 454 coordinates Mg(2+). Serine 480 acts as the Proton acceptor in catalysis.

This sequence belongs to the IlvD/Edd family. In terms of assembly, homodimer. [2Fe-2S] cluster serves as cofactor. Mg(2+) is required as a cofactor.

The enzyme catalyses (2R)-2,3-dihydroxy-3-methylbutanoate = 3-methyl-2-oxobutanoate + H2O. It catalyses the reaction (2R,3R)-2,3-dihydroxy-3-methylpentanoate = (S)-3-methyl-2-oxopentanoate + H2O. Its pathway is amino-acid biosynthesis; L-isoleucine biosynthesis; L-isoleucine from 2-oxobutanoate: step 3/4. It participates in amino-acid biosynthesis; L-valine biosynthesis; L-valine from pyruvate: step 3/4. Functionally, functions in the biosynthesis of branched-chain amino acids. Catalyzes the dehydration of (2R,3R)-2,3-dihydroxy-3-methylpentanoate (2,3-dihydroxy-3-methylvalerate) into 2-oxo-3-methylpentanoate (2-oxo-3-methylvalerate) and of (2R)-2,3-dihydroxy-3-methylbutanoate (2,3-dihydroxyisovalerate) into 2-oxo-3-methylbutanoate (2-oxoisovalerate), the penultimate precursor to L-isoleucine and L-valine, respectively. The chain is Dihydroxy-acid dehydratase from Clavibacter michiganensis subsp. michiganensis (strain NCPPB 382).